The sequence spans 185 residues: Hypoxanthine/guanine phosphoribosyltransferase (185 aa).

This sequence belongs to the purine/pyrimidine phosphoribosyltransferase family. Archaeal HPRT subfamily. In terms of assembly, homodimer.

It is found in the cytoplasm. The catalysed reaction is IMP + diphosphate = hypoxanthine + 5-phospho-alpha-D-ribose 1-diphosphate. It catalyses the reaction GMP + diphosphate = guanine + 5-phospho-alpha-D-ribose 1-diphosphate. It participates in purine metabolism; IMP biosynthesis via salvage pathway; IMP from hypoxanthine: step 1/1. In terms of biological role, catalyzes a salvage reaction resulting in the formation of IMP that is energically less costly than de novo synthesis. This is Hypoxanthine/guanine phosphoribosyltransferase from Methanococcus maripaludis (strain C5 / ATCC BAA-1333).